Reading from the N-terminus, the 428-residue chain is Exodeoxyribonuclease 7 large subunit (428 aa).

This sequence belongs to the XseA family. As to quaternary structure, heterooligomer composed of large and small subunits.

Its subcellular location is the cytoplasm. It carries out the reaction Exonucleolytic cleavage in either 5'- to 3'- or 3'- to 5'-direction to yield nucleoside 5'-phosphates.. Functionally, bidirectionally degrades single-stranded DNA into large acid-insoluble oligonucleotides, which are then degraded further into small acid-soluble oligonucleotides. The chain is Exodeoxyribonuclease 7 large subunit from Mycobacterium leprae (strain TN).